We begin with the raw amino-acid sequence, 246 residues long: Pyrroloquinoline-quinone synthase (246 aa).

This sequence belongs to the PqqC family.

It catalyses the reaction 6-(2-amino-2-carboxyethyl)-7,8-dioxo-1,2,3,4,7,8-hexahydroquinoline-2,4-dicarboxylate + 3 O2 = pyrroloquinoline quinone + 2 H2O2 + 2 H2O + H(+). It participates in cofactor biosynthesis; pyrroloquinoline quinone biosynthesis. Ring cyclization and eight-electron oxidation of 3a-(2-amino-2-carboxyethyl)-4,5-dioxo-4,5,6,7,8,9-hexahydroquinoline-7,9-dicarboxylic-acid to PQQ. This is Pyrroloquinoline-quinone synthase from Acidiphilium cryptum (strain JF-5).